We begin with the raw amino-acid sequence, 363 residues long: Cleavage and termination factor 1 (363 aa).

The 79-residue stretch at 7-85 (NVVFVGNIPY…RKIRVEFPSN (79 aa)) folds into the RRM domain. Positions 291–325 (QPASATSSPPSVPQKIPSSNHKSQQANGSDQGNEG) are disordered. A compositionally biased stretch (polar residues) spans 306-322 (IPSSNHKSQQANGSDQG).

In terms of assembly, interacts with res2.

Its subcellular location is the nucleus. Functionally, component of the cleavage factor I (CF I) involved in pre-mRNA 3'-end processing. This Schizosaccharomyces pombe (strain 972 / ATCC 24843) (Fission yeast) protein is Cleavage and termination factor 1 (ctf1).